The chain runs to 86 residues: Small ribosomal subunit protein bS16c (86 aa).

The protein belongs to the bacterial ribosomal protein bS16 family.

The protein resides in the plastid. It is found in the chloroplast. The protein is Small ribosomal subunit protein bS16c of Liriodendron tulipifera (Tuliptree).